Consider the following 226-residue polypeptide: Spermatogenesis-associated protein 25 (226 aa).

A helical membrane pass occupies residues 153-173 (ICILTLAMMIAGIPTVPVPGL).

The protein belongs to the SPATA25 family. As to expression, expressed strongly in testis, weakly in epididymis and not detected in other tissues.

It localises to the membrane. May play a role in spermatogenesis. This chain is Spermatogenesis-associated protein 25 (Spata25), found in Mus musculus (Mouse).